The primary structure comprises 278 residues: MPFITVGQENSTSIDLYYEDHGTGQPVVLIHGFPLSGHSWERQSAALLDAGYRVITYDRRGFGQSSQPTTGYDYDTFAADLNTVLETLDLQDAVLVGFSMGTGEVARYVSSYGTARIAKVAFLASLEPFLLKTDDNPDGAAPQEFFDGIVAAVKADRYAFYTGFFNDFYNLDENLGTRISEEAVRNSWNTAASGGFFAAAAAPTTWYTDFRADIPRIDVPALILHGTGDRTLPIENTARVFHKALPSAEYVEVEGAPHGLLWTHAEEVNTALLAFLAK.

Residues 26 to 264 (PVVLIHGFPL…GAPHGLLWTH (239 aa)) form the AB hydrolase-1 domain. Catalysis depends on residues serine 99, aspartate 229, and histidine 258.

Belongs to the AB hydrolase superfamily. Bacterial non-heme haloperoxidase / perhydrolase family. In terms of assembly, homotrimer.

May be a chlorinating enzyme involved in 7-chlorotetracycline biosynthesis. This Kitasatospora aureofaciens (Streptomyces aureofaciens) protein is Non-haem bromoperoxidase BPO-A2 (bpoA2).